The primary structure comprises 169 residues: GTP-dependent dephospho-CoA kinase (169 aa).

GTP is bound by residues Asp45, Asp64, Lys66, and Glu121.

It belongs to the GTP-dependent DPCK family.

It carries out the reaction 3'-dephospho-CoA + GTP = GDP + CoA + H(+). The protein operates within cofactor biosynthesis; coenzyme A biosynthesis. Its function is as follows. Catalyzes the GTP-dependent phosphorylation of the 3'-hydroxyl group of dephosphocoenzyme A to form coenzyme A (CoA). This is GTP-dependent dephospho-CoA kinase from Methanosphaera stadtmanae (strain ATCC 43021 / DSM 3091 / JCM 11832 / MCB-3).